A 208-amino-acid polypeptide reads, in one-letter code: Thymidylate kinase (208 aa).

9–16 (GGEGCGKS) provides a ligand contact to ATP.

The protein belongs to the thymidylate kinase family.

It catalyses the reaction dTMP + ATP = dTDP + ADP. Functionally, phosphorylation of dTMP to form dTDP in both de novo and salvage pathways of dTTP synthesis. In Dehalococcoides mccartyi (strain ATCC BAA-2100 / JCM 16839 / KCTC 5957 / BAV1), this protein is Thymidylate kinase.